Consider the following 586-residue polypeptide: Lipoprotein LpqB (586 aa).

The first 17 residues, 1-17 (MVRSVFALVFAAVLLGG), serve as a signal peptide directing secretion. A lipid anchor (N-palmitoyl cysteine) is attached at Cys-18. A lipid anchor (S-diacylglycerol cysteine) is attached at Cys-18. Residues 26 to 45 (APQAIGTVERPAPSNLPKPI) are disordered.

Belongs to the LpqB lipoprotein family.

The protein localises to the cell membrane. The sequence is that of Lipoprotein LpqB from Mycobacterium ulcerans (strain Agy99).